The primary structure comprises 236 residues: Small ribosomal subunit protein uS2c (236 aa).

Belongs to the universal ribosomal protein uS2 family.

Its subcellular location is the plastid. The protein resides in the chloroplast. This chain is Small ribosomal subunit protein uS2c (rps2), found in Morus indica (Mulberry).